We begin with the raw amino-acid sequence, 450 residues long: Asparagine--tRNA ligase (450 aa).

The protein belongs to the class-II aminoacyl-tRNA synthetase family. As to quaternary structure, homodimer.

It is found in the cytoplasm. The enzyme catalyses tRNA(Asn) + L-asparagine + ATP = L-asparaginyl-tRNA(Asn) + AMP + diphosphate + H(+). This chain is Asparagine--tRNA ligase, found in Mycoplasmopsis pulmonis (strain UAB CTIP) (Mycoplasma pulmonis).